Here is a 334-residue protein sequence, read N- to C-terminus: MQKKVIAAIIGTSAISAVAATQANAATTHTVKPGESVWAISNKYGISIAKLKSLNNLTSNLIFPNQVLKVSGSSNSTSNSSRPSTNSGGGSYYTVQAGDSLSLIASKYGTTYQNIMRLNGLNNFFIYPGQKLKVSGTASSSNSTSNSSRPSTNSSGGSYYTVQAGDSLSLIASKYGTTYQNIMRLNGLNNFFIYPGQKLKVTGNASTNSGSTTTTNRGYNTPVFNHQNLYTWGQCTYHVFNRRAEIGKGISTYWWNANNWDNAAAADGYTIDNRPTVGSIAQTDVGYYGHVMFVERVNNDGSILVSEMNYSAAPGILTYRTVPAYQVNNYRYIH.

An N-terminal signal peptide occupies residues methionine 1–alanine 25. The region spanning threonine 27–valine 70 is the LysM 1 domain. Low complexity predominate over residues serine 71 to asparagine 86. The segment at serine 71–glycine 90 is disordered. Residues serine 91–valine 134 enclose the LysM 2 domain. Positions threonine 137–glycine 156 are disordered. The LysM 3 domain occupies serine 158–valine 201. The region spanning glycine 210–histidine 334 is the Peptidase C51 domain.

It localises to the secreted. The protein resides in the cell surface. It carries out the reaction Hydrolyzes the link between N-acetylmuramoyl residues and L-amino acid residues in certain cell-wall glycopeptides.. Peptidoglycan hydrolase involved in the splitting of the septum during cell division. This Staphylococcus aureus (strain MRSA252) protein is N-acetylmuramoyl-L-alanine amidase sle1 (sle1).